Here is a 102-residue protein sequence, read N- to C-terminus: Nuclear protein 2 (102 aa).

2 disordered regions span residues 1-26 and 46-102; these read MDPP…ALPT and PASG…TRLA. The span at 85-102 shows a compositional bias: basic residues; sequence QRKRRQRQLQPRPRTRLA.

The protein belongs to the NUPR family.

The protein resides in the nucleus. Functionally, acts as a transcriptional repressor by inhibiting gene expression at the NUPR1 promoter in a p53/TP53-dependent manner in cancer cells. Involved in the G1 cell cycle arrest, and in a decrease in cell viability and cell proliferation of pancreatic cancer cells. Plays a role as a negative regulator of the protumoral factor NUPR1. In Mus musculus (Mouse), this protein is Nuclear protein 2.